Reading from the N-terminus, the 153-residue chain is ATP synthase subunit b' (153 aa).

The chain crosses the membrane as a helical span at residues 20-40; sequence TLPLMAVQVVLLTFILNALFF.

This sequence belongs to the ATPase B chain family. As to quaternary structure, F-type ATPases have 2 components, F(1) - the catalytic core - and F(0) - the membrane proton channel. F(1) has five subunits: alpha(3), beta(3), gamma(1), delta(1), epsilon(1). F(0) has four main subunits: a(1), b(1), b'(1) and c(10-14). The alpha and beta chains form an alternating ring which encloses part of the gamma chain. F(1) is attached to F(0) by a central stalk formed by the gamma and epsilon chains, while a peripheral stalk is formed by the delta, b and b' chains.

It is found in the cellular thylakoid membrane. Functionally, f(1)F(0) ATP synthase produces ATP from ADP in the presence of a proton or sodium gradient. F-type ATPases consist of two structural domains, F(1) containing the extramembraneous catalytic core and F(0) containing the membrane proton channel, linked together by a central stalk and a peripheral stalk. During catalysis, ATP synthesis in the catalytic domain of F(1) is coupled via a rotary mechanism of the central stalk subunits to proton translocation. Its function is as follows. Component of the F(0) channel, it forms part of the peripheral stalk, linking F(1) to F(0). The b'-subunit is a diverged and duplicated form of b found in plants and photosynthetic bacteria. This chain is ATP synthase subunit b', found in Prochlorococcus marinus (strain NATL1A).